The following is an 891-amino-acid chain: Protein SEY1 homolog (891 aa).

The Cytoplasmic portion of the chain corresponds to 1–754; the sequence is MNLHLVDSDG…LRAAEAGNQR (754 aa). Residues 52–318 enclose the GB1/RHD3-type G domain; it reads GLNYHVVGVF…RCSDYLFSYH (267 aa). 62–69 is a binding site for GTP; sequence GGQSSGKS. The helical transmembrane segment at 755–775 threads the bilayer; sequence LPAWVIPALFILGWNELLYVL. The Lumenal portion of the chain corresponds to 776 to 778; sequence TSP. A helical transmembrane segment spans residues 779–799; sequence ALLVLVVVICAVFFRQFFVSQ. Topologically, residues 800–891 are cytoplasmic; it reads WHAFEETGPA…MRHRTTHKLD (92 aa). Over residues 863 to 880 the composition is skewed to polar residues; that stretch reads STHADPAPSNTTVPTAQA. The tract at residues 863–891 is disordered; it reads STHADPAPSNTTVPTAQATMRHRTTHKLD. The segment covering 882–891 has biased composition (basic residues); sequence MRHRTTHKLD.

The protein belongs to the TRAFAC class dynamin-like GTPase superfamily. GB1/RHD3 GTPase family. RHD3 subfamily.

It is found in the endoplasmic reticulum membrane. Functionally, probable GTP-binding protein that may be involved in cell development. This chain is Protein SEY1 homolog, found in Leishmania braziliensis.